A 103-amino-acid polypeptide reads, in one-letter code: Acyl-CoA-binding protein (103 aa).

One can recognise an ACB domain in the interval 18–103 (HQADFDEAAE…AKTMVEKYGI (86 aa)). Residues Lys-30, 45–49 (YGFYK), Lys-67, Lys-71, and Tyr-90 contribute to the an acyl-CoA site.

This sequence belongs to the ACBP family. Monomer.

Its subcellular location is the endoplasmic reticulum. The protein localises to the golgi apparatus. Binds medium- and long-chain acyl-CoA esters with very high affinity and may function as an intracellular carrier of acyl-CoA esters. It is also able to displace diazepam from the benzodiazepine (BZD) recognition site located on the GABA type A receptor. It is therefore possible that this protein also acts as a neuropeptide to modulate the action of the GABA receptor. This chain is Acyl-CoA-binding protein (DBI), found in Anas platyrhynchos (Mallard).